The primary structure comprises 252 residues: Major prion protein (252 aa).

The first 22 residues, 1–22 (MANLGYWMLVLFVATWSDLGLC), serve as a signal peptide directing secretion. Residues 23–229 (KKRPKPGGWN…ESQAYYQRGS (207 aa)) are interaction with GRB2, ERI3 and SYN1. Residues 26 to 104 (PKPGGWNTGG…HNQWNKPSKP (79 aa)) form a disordered region. 5 tandem repeats follow at residues 51–58 (PQGGGWGQ), 59–66 (PHGGGWGQ), 67–74 (PHGGGWGQ), 75–82 (PHGGGWGQ), and 83–90 (PHGGGWGQ). Residues 51–90 (PQGGGWGQPHGGGWGQPHGGGWGQPHGGGWGQPHGGGWGQ) form a 5 X 8 AA tandem repeats of P-H-G-G-G-W-G-Q region. The segment covering 52-92 (QGGGWGQPHGGGWGQPHGGGWGQPHGGGWGQPHGGGWGQAG) has biased composition (gly residues). Cu(2+) is bound by residues His60, Gly61, Gly62, His68, Gly69, Gly70, His76, Gly77, Gly78, His84, Gly85, and Gly86. Cysteines 178 and 213 form a disulfide. N-linked (GlcNAc...) asparagine glycosylation is found at Asn180 and Asn196. Ser229 carries the GPI-anchor amidated serine lipid modification. The propeptide at 230-252 (SMVLFSSPPVILLISFLIFLIVG) is removed in mature form.

This sequence belongs to the prion family. As to quaternary structure, monomer and homodimer. Has a tendency to aggregate into amyloid fibrils containing a cross-beta spine, formed by a steric zipper of superposed beta-strands. Soluble oligomers may represent an intermediate stage on the path to fibril formation. Copper binding may promote oligomerization. Interacts with GRB2, APP, ERI3/PRNPIP and SYN1. Mislocalized cytosolically exposed PrP interacts with MGRN1; this interaction alters MGRN1 subcellular location and causes lysosomal enlargement. Interacts with KIAA1191.

The protein localises to the cell membrane. It is found in the golgi apparatus. In terms of biological role, its primary physiological function is unclear. Has cytoprotective activity against internal or environmental stresses. May play a role in neuronal development and synaptic plasticity. May be required for neuronal myelin sheath maintenance. May play a role in iron uptake and iron homeostasis. Soluble oligomers are toxic to cultured neuroblastoma cells and induce apoptosis (in vitro). Association with GPC1 (via its heparan sulfate chains) targets PRNP to lipid rafts. Also provides Cu(2+) or Zn(2+) for the ascorbate-mediated GPC1 deaminase degradation of its heparan sulfate side chains. The chain is Major prion protein (PRNP) from Ateles paniscus (Black spider monkey).